The primary structure comprises 221 residues: Protein Thf1 (221 aa).

The stretch at 174-213 forms a coiled coil; sequence TKERVEKDVNLYKSSLDKIEKALELIEMNIKDEKRRNKER.

Belongs to the THF1 family.

Its function is as follows. May be involved in photosynthetic membrane biogenesis. This chain is Protein Thf1, found in Prochlorococcus marinus (strain MIT 9211).